The following is a 418-amino-acid chain: Protein FAM53A (418 aa).

2 disordered regions span residues 198-236 (TSPVPRPSSASSGFVDSSEGSTSSSTRWNSGGPCDFNPR) and 248-269 (ETGNLLPSANSTPTSTPELSRR). The span at 205 to 229 (SSASSGFVDSSEGSTSSSTRWNSGG) shows a compositional bias: low complexity. The segment covering 248-265 (ETGNLLPSANSTPTSTPE) has biased composition (polar residues). The Nuclear localization signal signature appears at 285–293 (KKSRLKRRR).

This sequence belongs to the FAM53 family.

It localises to the nucleus. Functionally, may play an important role in neural development; the dorsomedial roof of the third ventricle. This is Protein FAM53A from Gallus gallus (Chicken).